The chain runs to 435 residues: Sulfopropanediol 3-dehydrogenase (435 aa).

Residues Y119, Q181, and N204 each coordinate NAD(+). Q249 and H252 together coordinate Zn(2+). Catalysis depends on proton acceptor residues E319 and H320. Residues D353 and H412 each coordinate Zn(2+).

It belongs to the histidinol dehydrogenase family. HpsN subfamily. Requires Zn(2+) as cofactor.

The enzyme catalyses (2R)-3-sulfopropanediol + 2 NAD(+) + H2O = (2R)-3-sulfolactate + 2 NADH + 3 H(+). Its function is as follows. Catalyzes the NAD-dependent oxidation of (R)-2,3-dihydroxypropane-1-sulfonate to (R)-3-sulfolactate. The protein is Sulfopropanediol 3-dehydrogenase of Ruegeria pomeroyi (strain ATCC 700808 / DSM 15171 / DSS-3) (Silicibacter pomeroyi).